A 440-amino-acid chain; its full sequence is Protein CapE (440 aa).

12 helical membrane passes run 7-27, 31-51, 60-80, 102-122, 141-161, 179-199, 204-224, 249-269, 324-344, 360-380, 382-402, and 409-429; these read VILI…IGYL, IGFR…VYLL, LVYL…NIFL, FSIA…ISVF, FYYT…FYII, ELPM…FAFS, THIK…LITG, WWMI…IKVF, IFSY…GYGF, YYNG…LLLW, FTNF…SVLI, and FSFV…LLFI.

The protein localises to the cell membrane. The protein operates within capsule biogenesis; capsule polysaccharide biosynthesis. Its function is as follows. Required for the biosynthesis of type 1 capsular polysaccharide. This chain is Protein CapE (capE), found in Staphylococcus aureus.